A 250-amino-acid polypeptide reads, in one-letter code: Small ribosomal subunit protein uS2 (250 aa).

This sequence belongs to the universal ribosomal protein uS2 family.

The polypeptide is Small ribosomal subunit protein uS2 (Polaromonas naphthalenivorans (strain CJ2)).